The primary structure comprises 295 residues: MVDSVYRTRSLGVAAEGLPDQYADGEAARVWQLYIGDTRSRTSEYKTWLLGLLRQHGCRRVLDVACGTGVDSIMLVEEGFSVTSVDASDKMLKYALKERWNRRHEPAFDKWVIEEANWMTLDKDVPQPAGGGFDAVICLGNSFAHLPDCKGDQSEHRQALKNIASMVRTGGLLVIDHRNYDHILSTGCAPPGKNIYYKSDLTKDVTTSVLTVNNKAHMVTLDYTVQVPAAGQDGPPSLSKFRLSYYPHCLAPFTELLRAAFEGKCQHSVLGDFKPYQPGQAYVPCYFIHVLKRTA.

Residues Ser-4 and Tyr-6 each contribute to the (6S)-5-methyl-5,6,7,8-tetrahydrofolate site. Residue Ser-10 is modified to Phosphoserine. Residues Tyr-22, Trp-31, Tyr-34, and Arg-41 each contribute to the S-adenosyl-L-methionine site. Tyr-34 carries the phosphotyrosine modification. Position 46 is an N6-succinyllysine (Lys-46). S-adenosyl-L-methionine-binding positions include Ala-65, 86–88 (DAS), 117–118 (NW), 139–142 (LGNS), and Arg-178. N6-succinyllysine is present on residues Lys-193, Lys-198, and Lys-203. A (6S)-5-methyl-5,6,7,8-tetrahydrofolate-binding site is contributed by His-217. Tyr-223 lines the S-adenosyl-L-methionine pocket. Arg-242 provides a ligand contact to (6S)-5-methyl-5,6,7,8-tetrahydrofolate.

Belongs to the class I-like SAM-binding methyltransferase superfamily. Glycine N-methyltransferase family. In terms of assembly, homotetramer. In terms of tissue distribution, abundant in liver.

It is found in the cytoplasm. The catalysed reaction is glycine + S-adenosyl-L-methionine = sarcosine + S-adenosyl-L-homocysteine + H(+). With respect to regulation, inhibited by 5-methyltetrahydrofolate monoglutamate and by 5-methyltetrahydrofolate pentaglutamate, inhibition is much more effective by the pentaglutamate form than by the monoglutamate form. Two molecules of 5-methyltetrahydrofolate are bound per tetramer. The binding sites are localized between subunits. Inhibitor binding may preclude movements of the polypeptide chain that are necessary for enzyme activity. Catalyzes the methylation of glycine by using S-adenosylmethionine (AdoMet) to form N-methylglycine (sarcosine) with the concomitant production of S-adenosylhomocysteine (AdoHcy), a reaction regulated by the binding of 5-methyltetrahydrofolate. Plays an important role in the regulation of methyl group metabolism by regulating the ratio between S-adenosyl-L-methionine and S-adenosyl-L-homocysteine. The polypeptide is Glycine N-methyltransferase (GNMT) (Oryctolagus cuniculus (Rabbit)).